Here is a 199-residue protein sequence, read N- to C-terminus: Chaperone protein TorD (199 aa).

This sequence belongs to the TorD/DmsD family. TorD subfamily.

The protein localises to the cytoplasm. In terms of biological role, involved in the biogenesis of TorA. Acts on TorA before the insertion of the molybdenum cofactor and, as a result, probably favors a conformation of the apoenzyme that is competent for acquiring the cofactor. This chain is Chaperone protein TorD, found in Escherichia coli O45:K1 (strain S88 / ExPEC).